A 319-amino-acid chain; its full sequence is Transcription factor STKL2 (319 aa).

The disordered stretch occupies residues 1-119 (MAPLESPATA…NKKANPQRVW (119 aa)). The segment covering 21-34 (EIFKSSSEESKPKD) has biased composition (basic and acidic residues). Residues 38–55 (VPSSKTLKSPSAAVNSKT) show a composition bias toward polar residues. Residues 89 to 112 (RAGEGSTSRDMHVKRVKKEDDNKK) are compositionally biased toward basic and acidic residues.

The protein belongs to the GeBP family. In terms of tissue distribution, expressed strongly in leaves and flowers, weakly in roots, and very weakly in stems.

Its subcellular location is the nucleus. Transcription repressor that binds DNA in a sequence-specific manner, 5'-GCCT-3', to regulate the expression of PGR. Acts as a modulatory component for the glucose-triggered developmental leaf growth process. This chain is Transcription factor STKL2, found in Arabidopsis thaliana (Mouse-ear cress).